We begin with the raw amino-acid sequence, 258 residues long: Deoxyribose-phosphate aldolase 2 (258 aa).

The Proton donor/acceptor role is filled by Asp-102. Catalysis depends on Lys-165, which acts as the Schiff-base intermediate with acetaldehyde. The active-site Proton donor/acceptor is Lys-199.

Belongs to the DeoC/FbaB aldolase family. DeoC type 2 subfamily.

It is found in the cytoplasm. It catalyses the reaction 2-deoxy-D-ribose 5-phosphate = D-glyceraldehyde 3-phosphate + acetaldehyde. The protein operates within carbohydrate degradation; 2-deoxy-D-ribose 1-phosphate degradation; D-glyceraldehyde 3-phosphate and acetaldehyde from 2-deoxy-alpha-D-ribose 1-phosphate: step 2/2. Its function is as follows. Catalyzes a reversible aldol reaction between acetaldehyde and D-glyceraldehyde 3-phosphate to generate 2-deoxy-D-ribose 5-phosphate. In Vibrio vulnificus (strain YJ016), this protein is Deoxyribose-phosphate aldolase 2 (deoC2).